We begin with the raw amino-acid sequence, 197 residues long: Rac-like GTP-binding protein RAC1 (197 aa).

13–20 contacts GTP; it reads GDGAVGKT. The Effector region motif lies at 35 to 43; it reads YVPTVFDNF. Residues 60-64 and 118-121 each bind GTP; these read DTAGQ and TKLD. Cysteine methyl ester is present on Cys194. Cys194 carries the S-geranylgeranyl cysteine lipid modification. The propeptide at 195–197 is removed in mature form; it reads SIL.

This sequence belongs to the small GTPase superfamily. Rho family.

It localises to the cytoplasm. It is found in the membrane. Functionally, inactive GDP-bound Rho GTPases reside in the cytosol, are found in a complex with Rho GDP-dissociation inhibitors (Rho GDIs), and are released from the GDI protein in order to translocate to membranes upon activation. This is Rac-like GTP-binding protein RAC1 (RAC1) from Lotus japonicus (Lotus corniculatus var. japonicus).